A 312-amino-acid chain; its full sequence is MKGPKIAIVGSGAVGTSFLYAAMTRALGSEYMIIDINEKAKVGNVFDLQDASSSCPNFGKVVAGEYSQLKDYDFIFISAGRPQKQGGETRLQLLEGNVEIMKSIAKEIKKSGFNGVTLIASNPVDIMSYTYLKVTGFEPNKVIGSGTLLDSARLRYAIATKYQMSSKDVQAYVIGEHGDSSVSIISSAKIAGLSLKHFSKASDIEKEFGEIDQFIRRRAYEIIERKGATFYGIGEASADVAEQILKDTKEVRVVAPLLTGQYGAKDMMFGTPCVLSRKGIEKILEIELSNTEKVALENSIKVLKDNIKLAKL.

3 residues coordinate NAD(+): valine 14, aspartate 35, and tyrosine 66. Substrate contacts are provided by glutamine 83 and arginine 90. Residues serine 103, 120–122, and serine 145 each bind NAD(+); that span reads ASN. Residue 122–125 coordinates substrate; it reads NPVD. 150–153 lines the substrate pocket; the sequence is DSAR. The active-site Proton acceptor is histidine 177. The residue at position 220 (tyrosine 220) is a Phosphotyrosine. Threonine 229 contributes to the substrate binding site.

It belongs to the LDH/MDH superfamily. LDH family. In terms of assembly, homotetramer.

The protein resides in the cytoplasm. The enzyme catalyses (S)-lactate + NAD(+) = pyruvate + NADH + H(+). It participates in fermentation; pyruvate fermentation to lactate; (S)-lactate from pyruvate: step 1/1. Functionally, catalyzes the conversion of lactate to pyruvate. The sequence is that of L-lactate dehydrogenase from Mycoplasma genitalium (strain ATCC 33530 / DSM 19775 / NCTC 10195 / G37) (Mycoplasmoides genitalium).